We begin with the raw amino-acid sequence, 427 residues long: MKIWKSILFTTLLSCGAVAAPVELDKVAVIVNDGVILQSDINTAMKTLQANARQSGKSLPSASVLKEQVVEKLIIDTLQGQEADRIGVRIDDNRLNQAIAEIARNNNQSVEELAASVQAEGLSYPEFREQIRKEIAASEARNALVRRRINILPAEVDSLADQLAKETNATVQYKIGHIQLRFTDGQDKSEVEAQAKALVKKLNDGADFTEMAYTYSKGPKALQGGDWGWMRKEEMPTIFADQIKMQNKGSIIGPFRSGVGFHILKIEDVKGLETVAVTEVNARHILIKPTVILSDEGAKKQLNEFVRRIKAGEATFAQLASQYSQDPGSAAQDGELGYQTPDLYVPEFKHQVETLPVGSISEPFKTVHGWHIVEVLDRRQVDRTDSAMKNKAYRILFNRKFNEEAGAWMQELRASAFVEIVDDNNDN.

An N-terminal signal peptide occupies residues 1 to 19; sequence MKIWKSILFTTLLSCGAVA. PpiC domains are found at residues 170 to 268 and 277 to 377; these read TVQY…KIED and VTEV…EVLD.

It is found in the periplasm. The enzyme catalyses [protein]-peptidylproline (omega=180) = [protein]-peptidylproline (omega=0). Its function is as follows. Chaperone involved in the correct folding and assembly of outer membrane proteins. Recognizes specific patterns of aromatic residues and the orientation of their side chains, which are found more frequently in integral outer membrane proteins. May act in both early periplasmic and late outer membrane-associated steps of protein maturation. This Vibrio parahaemolyticus serotype O3:K6 (strain RIMD 2210633) protein is Chaperone SurA.